The sequence spans 1285 residues: Transmembrane channel-like protein 1 (1285 aa).

Residues 1–29 (MQEAARRASLRKEHTPTNEKFGDLSKQDS) are disordered. Residues 1–164 (MQEAARRASL…KIKRIESHFG (164 aa)) lie on the Cytoplasmic side of the membrane. A helical transmembrane segment spans residues 165–202 (SVVSSYFTFLRWIVFVNIMITLIALVFVVLPETLADSV). Residues 203-260 (ANEGRFNRTKTRKQIPANERVHADELAVVWHYDGYLRYSPLFYGYYSDDPFLGNKIKY) lie on the Extracellular side of the membrane. Residue Asn-209 is glycosylated (N-linked (GalNAc...) asparagine). A helical membrane pass occupies residues 261–292 (ALPLAYFMVTLTIFAYSFFAILRKMAANARMS). At 293-349 (KLSGSKAEQYIFNWKLFTGWDYTIGNSETASNTVMAVVIKLRESIADIKKDAHGKFR) the chain is on the cytoplasmic side. The chain crosses the membrane as a helical span at residues 350 to 381 (LLQFSLRVFANIIICAMLGFSIYCIIFAVQKS). Residues 382-388 (QVQDDGN) lie on the Extracellular side of the membrane. The chain crosses the membrane as a helical span at residues 389–416 (LFTKNQVPSVVSTITHVFPMIFDLIGKM). The Cytoplasmic portion of the chain corresponds to 417-420 (ENYH). The helical transmembrane segment at 421 to 455 (PRTALRAHLGRVLILYTVNYITLIFALFEKMTALR) threads the bilayer. At 456–667 (DRVNSTSTSS…NHDGHNNDIC (212 aa)) the chain is on the extracellular side. The disordered stretch occupies residues 458-488 (VNSTSTSSSHRTKRQQGGWNPNMQRPPPYAS). An intrachain disulfide couples Cys-667 to Cys-816. The helical transmembrane segment at 668-705 (WETIIGQEIVKLVTMDLIFTILSILVIDLFRGLWIKYC) threads the bilayer. A required for interaction with tmie region spans residues 696–720 (LFRGLWIKYCSSWWCWDIETTFPEY). Residues 706–724 (SSWWCWDIETTFPEYGEFK) lie on the Cytoplasmic side of the membrane. A helical membrane pass occupies residues 725–745 (VAENVLHIINNQGMIWLGLFF). Topologically, residues 746 to 748 (APL) are extracellular. A helical transmembrane segment spans residues 749 to 771 (LPAINNIKLIILMYIRGWAVMTC). Residues 766–773 (WAVMTCNV) are required for interaction with tmie. The Cytoplasmic portion of the chain corresponds to 772 to 785 (NVPAREIFRASRSS). A helical membrane pass occupies residues 786–809 (NFYLGILLIWLLLCTLPVGFVIAS). Residues 810-852 (MSPSRSCGPFARYQHFYTVVTREIEKRVDQTVLSYIRHIASPG) lie on the Extracellular side of the membrane. A helical membrane pass occupies residues 853 to 886 (VVIPIILFLILIIYFLFSLVRGLREANTDLQAQL). Topologically, residues 887-1285 (VHERTEEKKK…DEDDSPRQID (399 aa)) are cytoplasmic. Disordered regions lie at residues 940–962 (ADHA…DDER) and 1114–1285 (TIKE…RQID). Over residues 948–961 (SSEESDINEDEDDE) the composition is skewed to acidic residues. 3 stretches are compositionally biased toward basic and acidic residues: residues 1121 to 1131 (DPGKSDKKQTS), 1146 to 1156 (DEARALREKMK), and 1167 to 1182 (TVEE…ESEF). Positions 1197 to 1208 (TEEENEEEETDS) are enriched in acidic residues.

This sequence belongs to the TMC family. Homodimer. Interacts with calm-1 and tmie to form the MET channel. Expressed in the ASH polymodal avoidance neurons. Also expressed in other sensory neurons, including the ADF, ASE, ADL, AQR, PQR, URX and PHA cells.

Its subcellular location is the cell membrane. It carries out the reaction Na(+)(in) = Na(+)(out). The enzyme catalyses Ca(2+)(in) = Ca(2+)(out). The catalysed reaction is K(+)(in) = K(+)(out). Functionally, pore-forming subunit of the mechanotransducer (MET) non-selective cation channel complex. The MET complex is composed of symmetric dimeric MET channels, each channel comprising two copies of pore-forming ion-conducting transmembrane TMC subunits and auxiliary proteins including the transmembrane inner ear protein/tmie, the calcium-binding protein/calm-1 and arrestin domain protein arrd-6. Sodium ions are the most permeable, whereas calcium and potassium have lower indices. Sodium-sensor ion channel that acts specifically in salt taste chemosensation. Required for salt-evoked neuronal activity and behavioral avoidance of high concentrations of NaCl. This Caenorhabditis elegans protein is Transmembrane channel-like protein 1 (tmc-1).